A 222-amino-acid polypeptide reads, in one-letter code: Protein-L-isoaspartate O-methyltransferase (222 aa).

The active site involves serine 65.

The protein belongs to the methyltransferase superfamily. L-isoaspartyl/D-aspartyl protein methyltransferase family.

The protein localises to the cytoplasm. The catalysed reaction is [protein]-L-isoaspartate + S-adenosyl-L-methionine = [protein]-L-isoaspartate alpha-methyl ester + S-adenosyl-L-homocysteine. In terms of biological role, catalyzes the methyl esterification of L-isoaspartyl residues in peptides and proteins that result from spontaneous decomposition of normal L-aspartyl and L-asparaginyl residues. It plays a role in the repair and/or degradation of damaged proteins. The sequence is that of Protein-L-isoaspartate O-methyltransferase from Chlorobium luteolum (strain DSM 273 / BCRC 81028 / 2530) (Pelodictyon luteolum).